The sequence spans 243 residues: Terpene cyclase dpmaB (243 aa).

6 consecutive transmembrane segments (helical) span residues 11-31 (PGYL…GLGW), 51-71 (ALMP…IYPF), 112-132 (LPFI…ALAL), 141-161 (AFSA…QLLS), 169-189 (SYFL…QDVL), and 207-227 (IWFV…LWYV).

It belongs to the paxB family.

It localises to the membrane. Its pathway is secondary metabolite biosynthesis; terpenoid biosynthesis. Terpene cyclase; part of the gene cluster that mediates the biosynthesis of the diterpenoid pyrones subglutinols A and B. The first step of the pathway is the synthesis of the alpha-pyrone moiety by the polyketide synthase dpmaA via condensation of one acetyl-CoA starter unit with 3 malonyl-CoA units and 2 methylations. The alpha-pyrone is then combined with geranylgeranyl pyrophosphate (GGPP) formed by the GGPP synthase dpmaD through the action of the prenyltransferase dpmaC to yield a linear alpha-pyrone diterpenoid. Subsequent steps in the diterpenoid pyrone biosynthetic pathway involve the decalin core formation, which is initiated by the epoxidation of the C10-C11 olefin by the FAD-dependent oxidoreductase dpmaE, and is followed by a cyclization cascade catalyzed by the terpene cyclase dpmaB. The dehydrogenase dpmaF is then involved in tetrahydrofuran (THF) ring formation at the C5 unit to complete the formation of subglutinols A and B. The protein is Terpene cyclase dpmaB of Metarhizium anisopliae (Entomophthora anisopliae).